Reading from the N-terminus, the 122-residue chain is Large ribosomal subunit protein eL31 (122 aa).

This sequence belongs to the eukaryotic ribosomal protein eL31 family.

The polypeptide is Large ribosomal subunit protein eL31 (Caenorhabditis elegans).